We begin with the raw amino-acid sequence, 258 residues long: Indole-3-glycerol phosphate synthase (258 aa).

It belongs to the TrpC family.

The enzyme catalyses 1-(2-carboxyphenylamino)-1-deoxy-D-ribulose 5-phosphate + H(+) = (1S,2R)-1-C-(indol-3-yl)glycerol 3-phosphate + CO2 + H2O. Its pathway is amino-acid biosynthesis; L-tryptophan biosynthesis; L-tryptophan from chorismate: step 4/5. In Campylobacter fetus subsp. fetus (strain 82-40), this protein is Indole-3-glycerol phosphate synthase.